Consider the following 377-residue polypeptide: UPF0754 membrane protein BPUM_0927 (377 aa).

The next 2 helical transmembrane spans lie at 1–21 and 357–377; these read MNIF…GAAT and FLGG…VTLF.

The protein belongs to the UPF0754 family.

It localises to the cell membrane. The chain is UPF0754 membrane protein BPUM_0927 from Bacillus pumilus (strain SAFR-032).